Reading from the N-terminus, the 285-residue chain is MEFWFSELHSPHVKFDIRVEKQLFSGESDYQRIDVFQSPEFGKFLTLNGSVIFSEQDCFIYNEMVVHVPMSVHPDVKNVLIIGGGDGGVSKELLQYDNIENIDIVEQDNMFVDVCREYFPETASGLEDERVHIYNSDALRFLRSKQDMYDLIINDATDPFGASEGLFTREFYGNCYKALKEDGILVYQHGSPFYDEDEDACRSMHRKVFHTFPISRVYQAHIPTSPSGYWLFGFASKKYHPLKDFKPAEWKRRNIHTEYYTTNLHTGAFMLPKYVEELLEQEEER.

Residues 2 to 237 (EFWFSELHSP…GYWLFGFASK (236 aa)) enclose the PABS domain. Gln31 contributes to the S-methyl-5'-thioadenosine binding site. Asp86 lines the spermidine pocket. S-methyl-5'-thioadenosine contacts are provided by residues Glu106 and 137–138 (DA). Asp155 functions as the Proton acceptor in the catalytic mechanism.

This sequence belongs to the spermidine/spermine synthase family. As to quaternary structure, homodimer or homotetramer.

The protein localises to the cytoplasm. The enzyme catalyses S-adenosyl 3-(methylsulfanyl)propylamine + putrescine = S-methyl-5'-thioadenosine + spermidine + H(+). The protein operates within amine and polyamine biosynthesis; spermidine biosynthesis; spermidine from putrescine: step 1/1. Its function is as follows. Catalyzes the irreversible transfer of a propylamine group from the amino donor S-adenosylmethioninamine (decarboxy-AdoMet) to putrescine (1,4-diaminobutane) to yield spermidine. This is Polyamine aminopropyltransferase from Lachnospira eligens (strain ATCC 27750 / DSM 3376 / VPI C15-48 / C15-B4) (Eubacterium eligens).